Consider the following 372-residue polypeptide: Putative glutamate--cysteine ligase 2 (372 aa).

It belongs to the glutamate--cysteine ligase type 2 family. YbdK subfamily.

The enzyme catalyses L-cysteine + L-glutamate + ATP = gamma-L-glutamyl-L-cysteine + ADP + phosphate + H(+). ATP-dependent carboxylate-amine ligase which exhibits weak glutamate--cysteine ligase activity. This Rhodopirellula baltica (strain DSM 10527 / NCIMB 13988 / SH1) protein is Putative glutamate--cysteine ligase 2.